A 361-amino-acid chain; its full sequence is 5-formaminoimidazole-4-carboxamide-1-(beta)-D-ribofuranosyl 5'-monophosphate synthetase (361 aa).

Positions 27 and 94 each coordinate 5-amino-1-(5-phospho-beta-D-ribosyl)imidazole-4-carboxamide. In terms of domain architecture, ATP-grasp spans arginine 116–lysine 348. Residues proline 146–cysteine 208 and glutamate 230 each bind ATP. Residue asparagine 258 coordinates 5-amino-1-(5-phospho-beta-D-ribosyl)imidazole-4-carboxamide. Residues glutamine 297 and glutamate 310 each contribute to the Mg(2+) site.

This sequence belongs to the phosphohexose mutase family. Mg(2+) is required as a cofactor. It depends on Mn(2+) as a cofactor.

The enzyme catalyses 5-amino-1-(5-phospho-beta-D-ribosyl)imidazole-4-carboxamide + formate + ATP = 5-formamido-1-(5-phospho-D-ribosyl)imidazole-4-carboxamide + ADP + phosphate. It participates in purine metabolism; IMP biosynthesis via de novo pathway; 5-formamido-1-(5-phospho-D-ribosyl)imidazole-4-carboxamide from 5-amino-1-(5-phospho-D-ribosyl)imidazole-4-carboxamide (formate route): step 1/1. In terms of biological role, catalyzes the ATP- and formate-dependent formylation of 5-aminoimidazole-4-carboxamide-1-beta-d-ribofuranosyl 5'-monophosphate (AICAR) to 5-formaminoimidazole-4-carboxamide-1-beta-d-ribofuranosyl 5'-monophosphate (FAICAR) in the absence of folates. The sequence is that of 5-formaminoimidazole-4-carboxamide-1-(beta)-D-ribofuranosyl 5'-monophosphate synthetase from Methanococcus maripaludis (strain C5 / ATCC BAA-1333).